Consider the following 320-residue polypeptide: Cytochrome f (320 aa).

Residues 1–35 (MQTINTFSWINQRITRSISVLLLVYIITRTSISSA) form the signal peptide. Tyrosine 36, cysteine 56, cysteine 59, and histidine 60 together coordinate heme. The helical transmembrane segment at 286–306 (VQGLLFFLASVILAQIFLVLK) threads the bilayer.

This sequence belongs to the cytochrome f family. The 4 large subunits of the cytochrome b6-f complex are cytochrome b6, subunit IV (17 kDa polypeptide, petD), cytochrome f and the Rieske protein, while the 4 small subunits are PetG, PetL, PetM and PetN. The complex functions as a dimer. Heme is required as a cofactor.

It is found in the plastid thylakoid membrane. Component of the cytochrome b6-f complex, which mediates electron transfer between photosystem II (PSII) and photosystem I (PSI), cyclic electron flow around PSI, and state transitions. The chain is Cytochrome f from Cuscuta exaltata (Tall dodder).